Reading from the N-terminus, the 86-residue chain is Small ribosomal subunit protein bS20 (86 aa).

A disordered region spans residues 1–25; that stretch reads MANIKSQIKRNKQNEKRHERNKAVK. Basic and acidic residues predominate over residues 12 to 22; the sequence is KQNEKRHERNK.

This sequence belongs to the bacterial ribosomal protein bS20 family.

Its function is as follows. Binds directly to 16S ribosomal RNA. The protein is Small ribosomal subunit protein bS20 of Nocardioides sp. (strain ATCC BAA-499 / JS614).